Consider the following 348-residue polypeptide: N-formyl peptide receptor 2 (348 aa).

Asn1 carries an N-linked (GlcNAc...) asparagine glycan. Residues 1-24 (NFSTPLSEYEEVSYESAGYTVLQI) lie on the Extracellular side of the membrane. A helical transmembrane segment spans residues 25-47 (LPLVVLGVTFVLGVLGNGLVIWV). The Cytoplasmic portion of the chain corresponds to 48-58 (AGFRMTRTVTT). The helical transmembrane segment at 59 to 80 (ICYLNLALADFSFTATLPFLIV) threads the bilayer. Topologically, residues 81 to 97 (SMAMGEKWPFGWFLCKL) are extracellular. The cysteines at positions 95 and 173 are disulfide-linked. A helical transmembrane segment spans residues 98–118 (IHIVVDINLFGSVFLIGFIAL). At 119 to 137 (DRCICVLHPVWAQNHRTVS) the chain is on the cytoplasmic side. Residues 138–159 (LAMKVIVGPWILALVLTLPVFL) traverse the membrane as a helical segment. The Extracellular segment spans residues 160-202 (FLTTVTIPNGDTYCTFNFASWGGTPEKRLKVAITMLTARGIIR). The helical transmembrane segment at 203-223 (FVIGFSMPMSIVATCYGLIAA) threads the bilayer. The Cytoplasmic segment spans residues 224–239 (KIHKKGMIKSSRPLRV). The helical transmembrane segment at 240-263 (LTAVVASFFICWFPFQLVALLSTV) threads the bilayer. At 264–283 (WLKEILVDGKYKIINILVNP) the chain is on the extracellular side. The chain crosses the membrane as a helical span at residues 284–303 (TSSLAFFNSCLNPMLYVFVG). The Cytoplasmic segment spans residues 304–348 (QDFRERLIHSLPTSLERALSEDSAPTNDTAASCASPPAETELQAM). The interval 322–348 (LSEDSAPTNDTAASCASPPAETELQAM) is disordered. The span at 326–335 (SAPTNDTAAS) shows a compositional bias: polar residues.

Belongs to the G-protein coupled receptor 1 family. In terms of assembly, interacts with APP; the interaction takes place at the cell surface and the complex is then rapidly internalized.

Its subcellular location is the cell membrane. Low affinity receptor for N-formyl-methionyl peptides, which are powerful neutrophil chemotactic factors. Binding of FMLP to the receptor causes activation of neutrophils. This response is mediated via a G-protein that activates a phosphatidylinositol-calcium second messenger system. Receptor for the chemokine-like protein FAM19A5, mediating FAM19A5-stimulated macrophage chemotaxis and the inhibitory effect on TNFSF11/RANKL-induced osteoclast differentiation. This chain is N-formyl peptide receptor 2 (FPR2), found in Macaca mulatta (Rhesus macaque).